The chain runs to 414 residues: Stork-head box protein ham-1 (414 aa).

An essential for association with cell cortex region spans residues 1–31 (MTYLAVVLNGPKAKNGRKVFDSFLEQNRQMF). Residues 93-170 (QQVEQMHFVP…MADHYFVSVP (78 aa)) form the Winged helix Storkhead-box1 domain. The interval 282–362 (ECQRKARRRN…SNEEAGSISD (81 aa)) is disordered. The bi-partite nuclear localization signal stretch occupies residues 285–295 (RKARRRNHPRR). The segment at 321 to 327 (PTRRRAR) is nuclear localization signal. Residues 332–351 (LRSSTPNNSDSAYSISPPHT) are compositionally biased toward polar residues.

It localises to the cytoplasm. It is found in the cell cortex. Its subcellular location is the nucleus. In terms of biological role, probable transcription factor. Required for asymmetric cell division in neuroblasts, perhaps acting by regulating spindle positioning and myosin polarization, and thus the position of the cleavage plane. Required to produce daughter cell size asymmetry in neuroblasts undergoing asymmetric cell division, usually giving rise to one precursor cell and one apoptotic cell. Positively modulates expression of the serine/threonine kinase pig-1/MELK during asymmetric division of the Q.a neuroblast. Plays a role in neural fate specification in several dopaminergic lineages, including the hermaphrodite-specific neuron (HSN)/phasmid neuron (PHB), acting in concert with the kinase, ham-1, and the T-box protein tbx-2 and the homeobox protein egl-5. This chain is Stork-head box protein ham-1, found in Caenorhabditis elegans.